Here is a 264-residue protein sequence, read N- to C-terminus: 3-dehydroquinate dehydratase (264 aa).

Residues 50 to 52 (EWR) and Arg86 contribute to the 3-dehydroquinate site. Residue His148 is the Proton donor/acceptor of the active site. Lys175 serves as the catalytic Schiff-base intermediate with substrate. The 3-dehydroquinate site is built by Arg217, Ser236, and Gln240.

This sequence belongs to the type-I 3-dehydroquinase family. As to quaternary structure, homodimer.

It catalyses the reaction 3-dehydroquinate = 3-dehydroshikimate + H2O. It participates in metabolic intermediate biosynthesis; chorismate biosynthesis; chorismate from D-erythrose 4-phosphate and phosphoenolpyruvate: step 3/7. In terms of biological role, involved in the third step of the chorismate pathway, which leads to the biosynthesis of aromatic amino acids. Catalyzes the cis-dehydration of 3-dehydroquinate (DHQ) and introduces the first double bond of the aromatic ring to yield 3-dehydroshikimate. This is 3-dehydroquinate dehydratase from Albidiferax ferrireducens (strain ATCC BAA-621 / DSM 15236 / T118) (Rhodoferax ferrireducens).